The sequence spans 187 residues: UPF0301 protein Sbal195_3177 (187 aa).

Belongs to the UPF0301 (AlgH) family.

The sequence is that of UPF0301 protein Sbal195_3177 from Shewanella baltica (strain OS195).